Reading from the N-terminus, the 439-residue chain is Synaptotagmin-B (439 aa).

Over M1–K74 the chain is Vesicular. N-linked (GlcNAc...) asparagine glycans are attached at residues N6 and N46. The helical transmembrane segment at I75–C101 threads the bilayer. Residues K102–K439 lie on the Cytoplasmic side of the membrane. Positions K113 to K155 are disordered. The span at K119–K129 shows a compositional bias: basic and acidic residues. Over residues Q135 to E151 the composition is skewed to acidic residues. The interval E153–N399 is phospholipid binding. 2 C2 domains span residues K159 to R278 and K290 to H423. The Ca(2+) site is built by L189, D190, D196, D248, F249, D250, S253, K254, D256, D321, D327, D381, D383, and D389.

Belongs to the synaptotagmin family. As to quaternary structure, homodimer or homotrimer (possible). Requires Ca(2+) as cofactor. As to expression, spinal cord, brainstem, midbrain and electric organ.

It is found in the cytoplasmic vesicle. The protein localises to the secretory vesicle. Its subcellular location is the synaptic vesicle membrane. It localises to the synapse. Its function is as follows. May have a regulatory role in the membrane interactions during trafficking of synaptic vesicles at the active zone of the synapse. It binds acidic phospholipids with a specificity that requires the presence of both an acidic head group and a diacyl backbone. This chain is Synaptotagmin-B (P65-B), found in Diplobatis ommata (Ocellated electric ray).